We begin with the raw amino-acid sequence, 518 residues long: Glutamate--cysteine ligase (518 aa).

This sequence belongs to the glutamate--cysteine ligase type 1 family. Type 1 subfamily.

The catalysed reaction is L-cysteine + L-glutamate + ATP = gamma-L-glutamyl-L-cysteine + ADP + phosphate + H(+). It participates in sulfur metabolism; glutathione biosynthesis; glutathione from L-cysteine and L-glutamate: step 1/2. In Escherichia coli O127:H6 (strain E2348/69 / EPEC), this protein is Glutamate--cysteine ligase.